A 151-amino-acid polypeptide reads, in one-letter code: MESPIRFADVDINTILKTLPHRFPFLLIDRVKNIREDHSGIGVKNVTFNEPAFQGHFPERPVFPGVLMIEGMAQTAGVIGIMSVTGTEKPRAVYFLTIDKCKFRKPVLPGDTIEYHMKSIGRRKTMWWFHGDAIVDGQTVAEADVGAMLTD.

His56 is a catalytic residue.

The protein belongs to the thioester dehydratase family. FabZ subfamily.

The protein localises to the cytoplasm. The catalysed reaction is a (3R)-hydroxyacyl-[ACP] = a (2E)-enoyl-[ACP] + H2O. Functionally, involved in unsaturated fatty acids biosynthesis. Catalyzes the dehydration of short chain beta-hydroxyacyl-ACPs and long chain saturated and unsaturated beta-hydroxyacyl-ACPs. The chain is 3-hydroxyacyl-[acyl-carrier-protein] dehydratase FabZ from Rhodopseudomonas palustris (strain HaA2).